The primary structure comprises 178 residues: Alkyl hydroperoxide reductase AhpD (178 aa).

Residue C130 is the Proton donor of the active site. C130 and C133 are joined by a disulfide. C133 functions as the Cysteine sulfenic acid (-SOH) intermediate in the catalytic mechanism.

The protein belongs to the AhpD family. As to quaternary structure, homotrimer.

It carries out the reaction N(6)-[(R)-dihydrolipoyl]-L-lysyl-[lipoyl-carrier protein] + a hydroperoxide = N(6)-[(R)-lipoyl]-L-lysyl-[lipoyl-carrier protein] + an alcohol + H2O. Functionally, antioxidant protein with alkyl hydroperoxidase activity. Required for the reduction of the AhpC active site cysteine residues and for the regeneration of the AhpC enzyme activity. In Mycobacterium marinum (strain ATCC BAA-535 / M), this protein is Alkyl hydroperoxide reductase AhpD.